Consider the following 358-residue polypeptide: Fructose-bisphosphate aldolase 7, cytosolic (358 aa).

Position 2 is an N-acetylserine (Ser-2). Residue Arg-52 participates in substrate binding. Cys-68 is modified (S-glutathionyl cysteine; transient). Position 142 (Lys-142) interacts with substrate. The residue at position 173 (Cys-173) is an S-glutathionyl cysteine; transient; alternate. Residue Cys-173 is modified to S-nitrosocysteine; transient; alternate. Glu-183 acts as the Proton acceptor in catalysis. The active-site Schiff-base intermediate with dihydroxyacetone-P is Lys-225. A substrate-binding site is contributed by 266 to 268; sequence SGI.

This sequence belongs to the class I fructose-bisphosphate aldolase family. As to quaternary structure, homotetramer. In terms of processing, S-glutathionylated at Cys-68 and Cys-173. Post-translationally, S-nitrosylated at Cys-173. As to expression, highly expressed in flowers, and at lower levels in rosettes leaves and cauline leaves.

Its subcellular location is the cytoplasm. It localises to the cytosol. The catalysed reaction is beta-D-fructose 1,6-bisphosphate = D-glyceraldehyde 3-phosphate + dihydroxyacetone phosphate. Its pathway is carbohydrate degradation; glycolysis; D-glyceraldehyde 3-phosphate and glycerone phosphate from D-glucose: step 4/4. Plays a key role in glycolysis and gluconeogenesis. The sequence is that of Fructose-bisphosphate aldolase 7, cytosolic from Arabidopsis thaliana (Mouse-ear cress).